A 400-amino-acid chain; its full sequence is Dual specificity mitogen-activated protein kinase kinase 2 (400 aa).

Residue methionine 1 is modified to N-acetylmethionine. The residue at position 23 (serine 23) is a Phosphoserine. The region spanning 72–369 (FERISELGAG…LKMLMSHTFI (298 aa)) is the Protein kinase domain. Residues 78–86 (LGAGNGGVV) and lysine 101 each bind ATP. Catalysis depends on aspartate 194, which acts as the Proton acceptor. Serine 222 is subject to Phosphoserine; by RAF. Phosphoserine occurs at positions 226, 293, 295, and 306. The interval 288 to 309 (EGEPHSISPRPRPPGRPISGHG) is disordered. Residues threonine 394 and threonine 396 each carry the phosphothreonine modification.

The protein belongs to the protein kinase superfamily. STE Ser/Thr protein kinase family. MAP kinase kinase subfamily. As to quaternary structure, interacts with MORG1. Interacts with SGK1. Interacts with KSR1. Interacts with KSR1 and BRAF; the interaction with KSR1 mediates KSR1-BRAF dimerization. Interacts with GLS. It depends on Mg(2+) as a cofactor. In terms of processing, MAPKK is itself dependent on Ser/Thr phosphorylation for activity catalyzed by MAP kinase kinase kinases (RAF or MEKK1).

It localises to the cytoplasm. It is found in the membrane. The enzyme catalyses L-seryl-[protein] + ATP = O-phospho-L-seryl-[protein] + ADP + H(+). It catalyses the reaction L-threonyl-[protein] + ATP = O-phospho-L-threonyl-[protein] + ADP + H(+). The catalysed reaction is L-tyrosyl-[protein] + ATP = O-phospho-L-tyrosyl-[protein] + ADP + H(+). Functionally, catalyzes the concomitant phosphorylation of a threonine and a tyrosine residue in a Thr-Glu-Tyr sequence located in MAP kinases. Activates the ERK1 and ERK2 MAP kinases. Activates BRAF in a KSR1 or KSR2-dependent manner; by binding to KSR1 or KSR2 releases the inhibitory intramolecular interaction between KSR1 or KSR2 protein kinase and N-terminal domains which promotes KSR1 or KSR2-BRAF dimerization and BRAF activation. The sequence is that of Dual specificity mitogen-activated protein kinase kinase 2 (MAP2K2) from Canis lupus familiaris (Dog).